Here is an 861-residue protein sequence, read N- to C-terminus: Homeobox-leucine zipper protein HOX29 (861 aa).

Residues 2-65 (DASKYVRYTP…NRRCREKQRK (64 aa)) constitute a DNA-binding region (homeobox). Positions 57 to 99 (RRCREKQRKESSRLQALNRKLTAMNKLLMEENDRLQKQVSQLV) form a coiled coil. The START domain occupies 162–390 (RDASPAGLMS…VAHEDTRSVI (229 aa)).

The protein belongs to the HD-ZIP homeobox family. Class III subfamily. Expressed in roots, stems and leaf blades.

The protein resides in the nucleus. Probable transcription factor. This chain is Homeobox-leucine zipper protein HOX29 (HOX29), found in Oryza sativa subsp. indica (Rice).